A 219-amino-acid polypeptide reads, in one-letter code: Uracil phosphoribosyltransferase 1 (219 aa).

Residues R33, R42, and 76–79 (DGRI) contribute to the GTP site. R86 contributes to the 5-phospho-alpha-D-ribose 1-diphosphate binding site. R103 is a GTP binding site. Residue R111 coordinates 5-phospho-alpha-D-ribose 1-diphosphate. Residue R132 coordinates GTP. 5-phospho-alpha-D-ribose 1-diphosphate contacts are provided by residues D138 and 138–146 (DPMLATGGS). Position 202 (Y202) interacts with D-ribose 5-phosphate. Residues I203 and 208-210 (GDF) contribute to the uracil site. D209 serves as a coordination point for 5-phospho-alpha-D-ribose 1-diphosphate.

This sequence belongs to the UPRTase family. The cofactor is Mg(2+).

The enzyme catalyses UMP + diphosphate = 5-phospho-alpha-D-ribose 1-diphosphate + uracil. It participates in pyrimidine metabolism; UMP biosynthesis via salvage pathway; UMP from uracil: step 1/1. Allosterically activated by GTP. Its function is as follows. Catalyzes the conversion of uracil and 5-phospho-alpha-D-ribose 1-diphosphate (PRPP) to UMP and diphosphate. The sequence is that of Uracil phosphoribosyltransferase 1 from Schizosaccharomyces pombe (strain 972 / ATCC 24843) (Fission yeast).